The sequence spans 96 residues: Protein Vpr (96 aa).

The interval 1–42 is homooligomerization; the sequence is MEQAPEDQGPQREPYNDWTLELLEELKNEAVRHFPRIWLHSL. Residues Ser79, Ser94, and Ser96 each carry the phosphoserine; by host modification.

This sequence belongs to the HIV-1 VPR protein family. Homooligomer, may form homodimer. Interacts with p6-gag region of the Pr55 Gag precursor protein through a (Leu-X-X)4 motif near the C-terminus of the P6gag protein. Interacts with host UNG. May interact with host RAD23A/HHR23A. Interacts with host VPRBP/DCAF1, leading to hijack the CUL4A-RBX1-DDB1-DCAF1/VPRBP complex, mediating ubiquitination of host proteins such as TERT and ZGPAT and arrest of the cell cycle in G2 phase. Phosphorylated on several residues by host. These phosphorylations regulate VPR activity for the nuclear import of the HIV-1 pre-integration complex.

The protein resides in the virion. It is found in the host nucleus. It localises to the host extracellular space. During virus replication, may deplete host UNG protein, and incude G2-M cell cycle arrest. Acts by targeting specific host proteins for degradation by the 26S proteasome, through association with the cellular CUL4A-DDB1 E3 ligase complex by direct interaction with host VPRPB/DCAF-1. Cell cycle arrest reportedly occurs within hours of infection and is not blocked by antiviral agents, suggesting that it is initiated by the VPR carried into the virion. Additionally, VPR induces apoptosis in a cell cycle dependent manner suggesting that these two effects are mechanistically linked. Detected in the serum and cerebrospinal fluid of AIDS patient, VPR may also induce cell death to bystander cells. In terms of biological role, during virus entry, plays a role in the transport of the viral pre-integration (PIC) complex to the host nucleus. This function is crucial for viral infection of non-dividing macrophages. May act directly at the nuclear pore complex, by binding nucleoporins phenylalanine-glycine (FG)-repeat regions. In Human immunodeficiency virus type 1 group M subtype B (strain 89.6) (HIV-1), this protein is Protein Vpr.